The primary structure comprises 225 residues: uncharacterized protein (225 aa).

A Fe2OG dioxygenase domain is found at 114 to 219; the sequence is DAEAIIMQVY…RLSVTMRRII (106 aa).

Belongs to the iron/ascorbate-dependent oxidoreductase family.

Its subcellular location is the cytoplasm. It is found in the nucleus. This is an uncharacterized protein from Schizosaccharomyces pombe (strain 972 / ATCC 24843) (Fission yeast).